The following is a 253-amino-acid chain: Dihydroanticapsin 7-dehydrogenase (253 aa).

9–31 is a binding site for NAD(+); the sequence is LITGGASGIGYAAVQAFLNQQAN. Residue Ser139 participates in substrate binding. The active-site Proton acceptor is Tyr152.

This sequence belongs to the short-chain dehydrogenases/reductases (SDR) family.

The enzyme catalyses L-dihydroanticapsin + NAD(+) = L-anticapsin + NADH + H(+). It functions in the pathway antibiotic biosynthesis; bacilysin biosynthesis. In terms of biological role, part of the bacABCDEFG operon responsible for the biosynthesis of bacilysin, an irreversible inactivator of the glutaminase domain of glucosamine synthetase. Catalyzes the dehydrogenation of the C7-hydroxyl group in the 4S-tetrahydrotyrosine (4S-H4Tyr) to yield anticapsin (epoxycyclohexanonyl-Ala). The protein is Dihydroanticapsin 7-dehydrogenase of Bacillus subtilis.